A 275-amino-acid polypeptide reads, in one-letter code: Formamidopyrimidine-DNA glycosylase (275 aa).

P2 serves as the catalytic Schiff-base intermediate with DNA. E3 functions as the Proton donor in the catalytic mechanism. The active-site Proton donor; for beta-elimination activity is K58. 3 residues coordinate DNA: H93, R111, and R156. The FPG-type zinc finger occupies 241–275 (FVYDRAGLPCRVCGTPIRQIVQGQRSTYFCPTCQR). The Proton donor; for delta-elimination activity role is filled by R265.

The protein belongs to the FPG family. Monomer. It depends on Zn(2+) as a cofactor.

The catalysed reaction is Hydrolysis of DNA containing ring-opened 7-methylguanine residues, releasing 2,6-diamino-4-hydroxy-5-(N-methyl)formamidopyrimidine.. The enzyme catalyses 2'-deoxyribonucleotide-(2'-deoxyribose 5'-phosphate)-2'-deoxyribonucleotide-DNA = a 3'-end 2'-deoxyribonucleotide-(2,3-dehydro-2,3-deoxyribose 5'-phosphate)-DNA + a 5'-end 5'-phospho-2'-deoxyribonucleoside-DNA + H(+). In terms of biological role, involved in base excision repair of DNA damaged by oxidation or by mutagenic agents. Acts as a DNA glycosylase that recognizes and removes damaged bases. Has a preference for oxidized purines, such as 7,8-dihydro-8-oxoguanine (8-oxoG). Has AP (apurinic/apyrimidinic) lyase activity and introduces nicks in the DNA strand. Cleaves the DNA backbone by beta-delta elimination to generate a single-strand break at the site of the removed base with both 3'- and 5'-phosphates. This Burkholderia ambifaria (strain MC40-6) protein is Formamidopyrimidine-DNA glycosylase.